The primary structure comprises 886 residues: MRRSAAPSQVQGKSFKKTRFIPPGRSNADVSKEITKMSPDPKLFQGAEQSQNDPGVCSSNPCPSEGIPREVGDGTRVDPLPPVHSASKEITESKAQEEEASSLLKYFSVVWCKASKKKHKKWEGDAILIVRGRSFTLKDLEGKDIGRGIGYKFKDLENVEEGQTLIIGGKEIEILGTISSDDFNSGKCFQHGSGSPAVPSSQAARKCFSNPFKSVCQSTQAQGKRWNDCRPRHNPCTPNALVMPRPDENHQRMFNRHCSPIVDVVIDPHLVHHLRPHQKDGIIFLYECVMGMRAVGKCGAILADEMGLGKTLQCISLIWTLQCQGPYGGKPVIKKTLIVTPGSLVNNWRKEFQKWLGSERIKIFTVDQDHKVEEFINSTFHSVLIISYEMLLRSLDQIKTIPFGLLICDEGHRLKNSSIKTTTALSSLSCEKTVILTGTPVQNDLQEFFALVDFVNPGILGSLSSYRKIYEEPIIISREPSSSKEERELGERRATELTRLTGRFILRRTQEVINKYLPPKIENVVFCRPGALQIELYRKLLRSQSVRFCLQGLLENSAHLICIGALKKLCNHPCLLFSSVKGKEFSSSCEENEERNLCQGLLSVFPAGYNPLQFSEEESGKLQVLVKLLAVIHELRPTEKVILVSNYRQTLNVLEEVCKRHGYACARLDGQTPVSQRQHIVDSFNSKYSTDFIFLLSSKAGGVGLNLIGGSHLILYDIDWNPATDIQAMSRVWRDGQKHPVHIYRLLTTGTIEEKIYQRQISKQGLSGAVVDLTRSSEHIQFSVEELKNLFTLHESSHCVTHDLLDCECTGEKGHTEDASEGPVASRQCQFGPQKSDALRPLSMSQLKQWKHFSGDHLNLPDPFLERIRENVSFFFQNITNQAPAV.

Over residues 1-12 (MRRSAAPSQVQG) the composition is skewed to polar residues. A disordered region spans residues 1–95 (MRRSAAPSQV…ASKEITESKA (95 aa)). Serine 14 bears the Phosphoserine mark. Polar residues predominate over residues 47 to 62 (AEQSQNDPGVCSSNPC). 2 stretches are compositionally biased toward basic and acidic residues: residues 67-76 (IPREVGDGTR) and 86-95 (ASKEITESKA). A Helicase ATP-binding domain is found at 291 to 458 (GMRAVGKCGA…FALVDFVNPG (168 aa)). Residue 304-311 (DEMGLGKT) participates in ATP binding. The DEGH box signature appears at 409–412 (DEGH). The Helicase C-terminal domain occupies 627–788 (KLLAVIHELR…HIQFSVEELK (162 aa)).

It belongs to the SNF2/RAD54 helicase family. In terms of assembly, interacts with RAD51 through the NH2-terminal domain.

The protein resides in the nucleus. Involved in DNA repair and mitotic recombination. May play an active role in recombination processes in concert with other members of the RAD52 epistasis group. The polypeptide is DNA repair and recombination protein RAD54B (Rad54b) (Mus musculus (Mouse)).